Here is a 350-residue protein sequence, read N- to C-terminus: uncharacterized protein (350 aa).

A compositionally biased stretch (basic and acidic residues) spans 197-212 (KNDNSEDNRSEDDLKS). The tract at residues 197–217 (KNDNSEDNRSEDDLKSSQDPV) is disordered.

It localises to the plastid. It is found in the chloroplast. This is an uncharacterized protein from Euglena gracilis.